Consider the following 113-residue polypeptide: U11-theraphotoxin-Hhn1a (113 aa).

The signal sequence occupies residues 1 to 21 (MNTVRVTFLLVFVLAVSLGQA). Positions 22–74 (DKDENRMVMQEKTEQGKSYLDFAENLLLQKLEELEAKLLEEDSEESRNSRQKR) are excised as a propeptide. Intrachain disulfides connect Cys75-Cys90, Cys82-Cys95, and Cys89-Cys110.

This sequence belongs to the neurotoxin 14 (magi-1) family. 01 (HNTX-16) subfamily. In terms of tissue distribution, expressed by the venom gland.

The protein localises to the secreted. Functionally, probable ion channel inhibitor. The chain is U11-theraphotoxin-Hhn1a from Cyriopagopus hainanus (Chinese bird spider).